The chain runs to 642 residues: ATP-dependent zinc metalloprotease FtsH (642 aa).

The Cytoplasmic segment spans residues 1–6; that stretch reads MGRFTK. A helical membrane pass occupies residues 7–27; that stretch reads NIVLYLLIIAAFVIAIDAFSG. The Extracellular segment spans residues 28–101; it reads QSANKSELSY…TAAPPEQPAW (74 aa). The chain crosses the membrane as a helical span at residues 102–122; that stretch reads WMSLLGSAIPIIILVVLFFFI. Residues 123-642 are Cytoplasmic-facing; the sequence is MQQTQGGGGR…LSEASSNEIK (520 aa). 194 to 201 contributes to the ATP binding site; sequence GPPGTGKT. His416 provides a ligand contact to Zn(2+). Glu417 is a catalytic residue. His420 and Asp492 together coordinate Zn(2+). The segment covering 597–610 has biased composition (basic and acidic residues); sequence TTKEPEAEEPKVAS. A disordered region spans residues 597–642; that stretch reads TTKEPEAEEPKVASEADSSIVPEGVDAKKTTSTVADLSEASSNEIK. Residues 626-642 are compositionally biased toward polar residues; that stretch reads TTSTVADLSEASSNEIK.

This sequence in the central section; belongs to the AAA ATPase family. The protein in the C-terminal section; belongs to the peptidase M41 family. In terms of assembly, homohexamer. It depends on Zn(2+) as a cofactor.

It is found in the cell membrane. Its function is as follows. Acts as a processive, ATP-dependent zinc metallopeptidase for both cytoplasmic and membrane proteins. Plays a role in the quality control of integral membrane proteins. The sequence is that of ATP-dependent zinc metalloprotease FtsH from Veillonella parvula (strain ATCC 10790 / DSM 2008 / CCUG 5123 / JCM 12972 / NCTC 11810 / Te3) (Veillonella alcalescens).